The primary structure comprises 226 residues: Orotidine 5'-phosphate decarboxylase (226 aa).

Substrate is bound by residues Asp-8, Lys-30, Asp-58–Thr-67, Thr-117, Arg-177, Gln-186, Gly-206, and Arg-207. Catalysis depends on Lys-60, which acts as the Proton donor.

This sequence belongs to the OMP decarboxylase family. Type 1 subfamily. As to quaternary structure, homodimer.

The enzyme catalyses orotidine 5'-phosphate + H(+) = UMP + CO2. It participates in pyrimidine metabolism; UMP biosynthesis via de novo pathway; UMP from orotate: step 2/2. Its function is as follows. Catalyzes the decarboxylation of orotidine 5'-monophosphate (OMP) to uridine 5'-monophosphate (UMP). This is Orotidine 5'-phosphate decarboxylase from Campylobacter concisus (strain 13826).